The sequence spans 116 residues: Iron-sulfur cluster assembly protein CyaY (116 aa).

The protein belongs to the frataxin family.

In terms of biological role, involved in iron-sulfur (Fe-S) cluster assembly. May act as a regulator of Fe-S biogenesis. The protein is Iron-sulfur cluster assembly protein CyaY of Polaromonas sp. (strain JS666 / ATCC BAA-500).